The chain runs to 333 residues: D-threonate 4-phosphate dehydrogenase (333 aa).

2 residues coordinate substrate: His-140 and Thr-141. 3 residues coordinate a divalent metal cation: His-170, His-214, and His-270. Residues Lys-278, Asn-287, and Arg-296 each contribute to the substrate site.

It belongs to the PdxA family. PdxA2 subfamily. In terms of assembly, homodimer. The cofactor is a divalent metal cation.

It catalyses the reaction 4-O-phospho-D-threonate + NAD(+) = dihydroxyacetone phosphate + CO2 + NADH. Its function is as follows. Catalyzes the NAD-dependent oxidation and subsequent decarboxylation of D-threonate 4-phosphate to produce dihydroxyacetone phosphate (DHAP). Can also use 4-hydroxy-L-threonine 4-phosphate as substrate. The polypeptide is D-threonate 4-phosphate dehydrogenase (Cupriavidus necator (strain ATCC 17699 / DSM 428 / KCTC 22496 / NCIMB 10442 / H16 / Stanier 337) (Ralstonia eutropha)).